The primary structure comprises 202 residues: STHGKIRIHDYVANGYVILFSHPGDFTPVCTTELAAMANYAKEFEKRGVKLLGISCDDVQSHKEWTKDIEAYKPGSKVTYPIMADPDRSAIKQLNMVDPDEKDAEGQLPSRTLHIVGPDKKVKLSFLYPSCTGRNMDEVVRAVDSLLTAAKHKVATPANWKPGECVVIAPGVSDEEAKKLFPQGFETKDLPSKKGYLRFTKV.

The 148-residue stretch at 1–148 (STHGKIRIHD…VVRAVDSLLT (148 aa)) folds into the Thioredoxin domain. The active-site Cysteine sulfenic acid (-SOH) intermediate is the C30. The Bipartite nuclear localization signal signature appears at 178 to 201 (KKLFPQGFETKDLPSKKGYLRFTK).

This sequence belongs to the peroxiredoxin family. Prx6 subfamily. Embryos.

It is found in the nucleus. Its subcellular location is the cytoplasm. It carries out the reaction a hydroperoxide + [thioredoxin]-dithiol = an alcohol + [thioredoxin]-disulfide + H2O. Thiol-specific peroxidase that catalyzes the reduction of hydrogen peroxide and organic hydroperoxides to water and alcohols, respectively. Seems to contribute to the inhibition of germination during stress. This chain is Probable 1-Cys peroxiredoxin, found in Bromus secalinus (Rye brome).